The following is a 489-amino-acid chain: 3-octaprenyl-4-hydroxybenzoate carboxy-lyase (489 aa).

Asn172 contacts Mn(2+). Prenylated FMN contacts are provided by residues 175 to 177 (IYR), 189 to 191 (RWL), and 194 to 195 (RG). A Mn(2+)-binding site is contributed by Glu238. Asp287 serves as the catalytic Proton donor.

It belongs to the UbiD family. In terms of assembly, homohexamer. Requires prenylated FMN as cofactor. Mn(2+) is required as a cofactor.

The protein resides in the cell membrane. It carries out the reaction a 4-hydroxy-3-(all-trans-polyprenyl)benzoate + H(+) = a 2-(all-trans-polyprenyl)phenol + CO2. It functions in the pathway cofactor biosynthesis; ubiquinone biosynthesis. In terms of biological role, catalyzes the decarboxylation of 3-octaprenyl-4-hydroxy benzoate to 2-octaprenylphenol, an intermediate step in ubiquinone biosynthesis. The sequence is that of 3-octaprenyl-4-hydroxybenzoate carboxy-lyase from Aeromonas hydrophila subsp. hydrophila (strain ATCC 7966 / DSM 30187 / BCRC 13018 / CCUG 14551 / JCM 1027 / KCTC 2358 / NCIMB 9240 / NCTC 8049).